Here is a 351-residue protein sequence, read N- to C-terminus: Rhodopsin (351 aa).

The Extracellular segment spans residues 1-36 (MNGTEGQDFYVPMSNKTGVVRSPFEYPQYYLAEPWK). N-linked (GlcNAc...) asparagine glycosylation is found at asparagine 2 and asparagine 15. A helical transmembrane segment spans residues 37–61 (FSALAAYMFMLILLGFPVNFLTLYV). Topologically, residues 62-73 (TIQHKKLRTPLN) are cytoplasmic. The helical transmembrane segment at 74–96 (YILLNLVVADLFMVFGGFTTTMY) threads the bilayer. At 97-110 (TSMNGYFVFGVTGC) the chain is on the extracellular side. Cysteine 110 and cysteine 187 form a disulfide bridge. The helical transmembrane segment at 111 to 133 (YIEGFFATLGGEIALWSLVVLAV) threads the bilayer. The 'Ionic lock' involved in activated form stabilization signature appears at 134–136 (ERY). The Cytoplasmic segment spans residues 134 to 152 (ERYVVVCKPMSNFRFGENH). Residues 153–173 (AIMGVAFSWIMAMACAAPPLF) traverse the membrane as a helical segment. The Extracellular portion of the chain corresponds to 174 to 202 (GWSRYIPEGMQCSCGIDYYTLKPEINNES). Residues 203 to 224 (FVIYMFVVHFMIPLAVIFFCYG) form a helical membrane-spanning segment. Topologically, residues 225-252 (NLVCTVKEAAAQQQESATTQKAEKEVTR) are cytoplasmic. A helical membrane pass occupies residues 253–274 (MVIIMVIAFLICWVPYASVAFY). The Extracellular segment spans residues 275 to 286 (IFTNQGSDFGPI). The chain crosses the membrane as a helical span at residues 287-308 (FMTIPAFFAKSSAIYNPVIYIV). An N6-(retinylidene)lysine modification is found at lysine 296. The Cytoplasmic segment spans residues 309 to 351 (MNKQFRNCMITTLCCGKNPLGDEDTSAGKTETSSVSTSQVSPA). S-palmitoyl cysteine attachment occurs at residues cysteine 322 and cysteine 323. The tract at residues 331 to 351 (EDTSAGKTETSSVSTSQVSPA) is disordered. Positions 340-351 (TSSVSTSQVSPA) are enriched in low complexity. Position 341 is a phosphoserine; by RK and GRK7 (serine 341).

The protein belongs to the G-protein coupled receptor 1 family. Opsin subfamily. Post-translationally, contains one covalently linked retinal chromophore. Upon light absorption, the covalently bound 11-cis-retinal is converted to all-trans-retinal. After hydrolysis of the Schiff base and release of the covalently bound all-trans-retinal, active rhodopsin is regenerated by binding of a fresh molecule of 11-cis-retinal.

The protein resides in the membrane. The protein localises to the cell projection. Its subcellular location is the cilium. It localises to the photoreceptor outer segment. Functionally, photoreceptor required for image-forming vision at low light intensity. Required for photoreceptor cell viability after birth. Light-induced isomerization of 11-cis to all-trans retinal triggers a conformational change that activates signaling via G-proteins. Subsequent receptor phosphorylation mediates displacement of the bound G-protein alpha subunit by arrestin and terminates signaling. The sequence is that of Rhodopsin (RHO) from Gallus gallus (Chicken).